Here is a 170-residue protein sequence, read N- to C-terminus: Adenine phosphoribosyltransferase (170 aa).

This sequence belongs to the purine/pyrimidine phosphoribosyltransferase family. Homodimer.

It localises to the cytoplasm. The catalysed reaction is AMP + diphosphate = 5-phospho-alpha-D-ribose 1-diphosphate + adenine. Its pathway is purine metabolism; AMP biosynthesis via salvage pathway; AMP from adenine: step 1/1. Catalyzes a salvage reaction resulting in the formation of AMP, that is energically less costly than de novo synthesis. This is Adenine phosphoribosyltransferase from Mycoplasmopsis agalactiae (strain NCTC 10123 / CIP 59.7 / PG2) (Mycoplasma agalactiae).